Here is a 424-residue protein sequence, read N- to C-terminus: Histidine--tRNA ligase (424 aa).

This sequence belongs to the class-II aminoacyl-tRNA synthetase family. Homodimer.

It localises to the cytoplasm. The catalysed reaction is tRNA(His) + L-histidine + ATP = L-histidyl-tRNA(His) + AMP + diphosphate + H(+). This chain is Histidine--tRNA ligase, found in Shewanella halifaxensis (strain HAW-EB4).